The chain runs to 281 residues: MEEGAALEGVVKLLEAGSVLAVTGAGVSTDSGIPDYRSPRGSLNQGRPMTYQEFRFDPVASHRYWARSFVGWRVMADAQPNRTHYALVELERAGLLSGIVTQNVDGLHRRAGSENLVALHGDLATIVCLQCGHREARELLDARLDHLNPGYFDSIALDPSAVNPDGDVTLDDHHVQRFTMAGCARCGSVLLKPDVVYFGEPVPSIRKTRVAQLLDGADAVVVAGSSLAVMSGYRIVIEAQRAGKPVAVINGGPGRADHRVDILWRTRVGPAFDQILDALDL.

The region spanning 1 to 281 is the Deacetylase sirtuin-type domain; that stretch reads MEEGAALEGV…FDQILDALDL (281 aa). NAD(+) contacts are provided by residues 24–44 and 102–105; these read GAGVSTDSGIPDYRSPRGSLN and QNVD. Catalysis depends on histidine 120, which acts as the Proton acceptor. Positions 128, 131, 183, and 186 each coordinate Zn(2+). NAD(+)-binding positions include 224–226, 250–252, and valine 268; these read GSS and NGG.

Belongs to the sirtuin family. Class II subfamily. Zn(2+) serves as cofactor.

The protein resides in the cytoplasm. The catalysed reaction is N(6)-acetyl-L-lysyl-[protein] + NAD(+) + H2O = 2''-O-acetyl-ADP-D-ribose + nicotinamide + L-lysyl-[protein]. NAD-dependent protein deacetylase which modulates the activities of several enzymes which are inactive in their acetylated form. The sequence is that of NAD-dependent protein deacetylase 1 from Corynebacterium efficiens (strain DSM 44549 / YS-314 / AJ 12310 / JCM 11189 / NBRC 100395).